The sequence spans 946 residues: Increased sodium tolerance protein 2 (946 aa).

Residues 1 to 121 lie on the Cytoplasmic side of the membrane; that stretch reads MSQTITSLDP…SNLTNNPKQS (121 aa). Residues 122 to 142 form a helical membrane-spanning segment; the sequence is LYFAFLQNYIKWLIPFSFFGL. Residues 143-153 are Extracellular-facing; sequence SIRFLSNFTYE. The chain crosses the membrane as a helical span at residues 154-174; that stretch reads FNSTYSLFAILWTLSFTAFWL. The Cytoplasmic segment spans residues 175–217; the sequence is YKYEPFWSDRLSKYSSFSTIEFLQDKQKAQKKASSVIMLKKCC. The helical transmembrane segment at 218–238 threads the bilayer; the sequence is FIPVALLFGAILLSFQLYCFA. Residues 239–253 are Extracellular-facing; sequence LEIFIKQIYNGPMIS. A helical transmembrane segment spans residues 254–274; sequence ILSFLPTILICTFTPVLTVIY. Residues 275–302 lie on the Cytoplasmic side of the membrane; that stretch reads NKYFVEPMTKWENHSSVVNAKKSKEAKN. A helical transmembrane segment spans residues 303–323; it reads FVIIFLSSYVPLLITLFLYLP. Topologically, residues 324–447 are extracellular; sequence MGHLLTAEIR…DANFKKLLLQ (124 aa). A helical membrane pass occupies residues 448-468; the sequence is FGYLVMFSTIWPLAPFICLIV. The Cytoplasmic segment spans residues 469 to 505; sequence NLIVYQVDLRKAVLYSKPEYFPFPIYDKPSSVSNTQK. Residues 506-526 form a helical membrane-spanning segment; the sequence is LTVGLWNSVLVMFSILGCVIT. Topologically, residues 527-563 are extracellular; sequence ATLTYMYQSCNIPGVGAHTSIHTNKAWYLANPINHSW. Residues 564-584 form a helical membrane-spanning segment; it reads INIVLYAVFIEHVSVAIFFLF. The Cytoplasmic segment spans residues 585–946; the sequence is SSILKSSHDD…GLLHKLKKKL (362 aa). 2 disordered regions span residues 617-638 and 665-718; these read EKIP…RKGS and THAN…TEKR. The segment covering 628–638 has biased composition (basic and acidic residues); sequence NEKELVQRKGS. The residue at position 638 (S638) is a Phosphoserine. Low complexity predominate over residues 671–689; that stretch reads PSSLSSASSPSLSSSSSSS. Position 701 is a phosphothreonine (T701). 2 positions are modified to phosphoserine: S704 and S720. T726 is subject to Phosphothreonine. Residue S729 is modified to Phosphoserine. Y730 is subject to Phosphotyrosine. A Phosphoserine modification is found at S757. Residues 759–784 are disordered; that stretch reads RDAKSSAESSNATNNNTLGTESKLLP. Low complexity predominate over residues 764–775; that stretch reads SAESSNATNNNT. Phosphoserine occurs at positions 793, 844, and 847. Residues 846 to 946 form a disordered region; sequence VSVATEQTKK…GLLHKLKKKL (101 aa). Residue T850 is modified to Phosphothreonine. Residues 859–868 show a composition bias toward polar residues; the sequence is STKNGPSRSI. The segment covering 884–893 has biased composition (low complexity); it reads TTTTTTTDAT. Over residues 895–905 the composition is skewed to basic residues; sequence PHHHHHHHRHR. The segment covering 916–927 has biased composition (low complexity); the sequence is SKTTESSSSSSA. The span at 931–946 shows a compositional bias: basic residues; that stretch reads KPKHKKGLLHKLKKKL.

In terms of assembly, interacts with BTN2.

It is found in the cell membrane. In terms of biological role, may be involved in ion homeostasis together with BTN1 or BTN2. This Saccharomyces cerevisiae (strain ATCC 204508 / S288c) (Baker's yeast) protein is Increased sodium tolerance protein 2 (IST2).